The chain runs to 226 residues: Endonuclease V (226 aa).

Positions 42 and 110 each coordinate Mg(2+).

It belongs to the endonuclease V family. It depends on Mg(2+) as a cofactor.

The protein resides in the cytoplasm. The catalysed reaction is Endonucleolytic cleavage at apurinic or apyrimidinic sites to products with a 5'-phosphate.. Its function is as follows. DNA repair enzyme involved in the repair of deaminated bases. Selectively cleaves double-stranded DNA at the second phosphodiester bond 3' to a deoxyinosine leaving behind the intact lesion on the nicked DNA. In Thermus thermophilus (strain ATCC BAA-163 / DSM 7039 / HB27), this protein is Endonuclease V.